The sequence spans 603 residues: UvrABC system protein C (603 aa).

A GIY-YIG domain is found at 13–92 (NGPGVYLMKD…IRKHKPRYNI (80 aa)). Residues 202–237 (NDLLQKIKEQMAAASERQEYELAARLRDRMFAIQAT) enclose the UVR domain.

It belongs to the UvrC family. In terms of assembly, interacts with UvrB in an incision complex.

The protein localises to the cytoplasm. Its function is as follows. The UvrABC repair system catalyzes the recognition and processing of DNA lesions. UvrC both incises the 5' and 3' sides of the lesion. The N-terminal half is responsible for the 3' incision and the C-terminal half is responsible for the 5' incision. The chain is UvrABC system protein C from Desulfatibacillum aliphaticivorans.